The primary structure comprises 612 residues: Peroxisomal targeting signal receptor (612 aa).

Position 1 is an N-acetylmethionine (Met-1). The interval 1–24 (MDVGSCSVGNNPLAQLHKHTQQNK) is disordered. Cys-6 is covalently cross-linked (Glycyl cysteine thioester (Cys-Gly) (interchain with G-Cter in ubiquitin)). The segment at 7–29 (SVGNNPLAQLHKHTQQNKSLQFN) is amphipathic helix 1 (AH1). Glycyl lysine isopeptide (Lys-Gly) (interchain with G-Cter in ubiquitin) cross-links involve residues Lys-18 and Lys-24. Ser-61 bears the Phosphoserine mark. A TPR 1 repeat occupies 64–97 (NMANMQRFINGEPLIDDKRRMEIGPSSGRLPPFS). The tract at residues 70-104 (RFINGEPLIDDKRRMEIGPSSGRLPPFSNVHSLQT) is amphipathic helix 2 (AH2). The WxxxF/Y motif 1 motif lies at 120 to 124 (WSQEF). A disordered region spans residues 129-151 (SIQNRNADTGNSEKAWQRGSTTA). The interval 158 to 174 (PNTMMNNYAYASMNSLS) is amphipathic helix 3 (AH3). A disordered region spans residues 182 to 202 (AFMNQQQSGRSKEGVNEQEQQ). The short motif at 204–208 (WTDQF) is the WxxxF/Y motif 2 element. The interval 257–273 (FQEVWDSIHKDAEEVLP) is amphipathic helix 4 (AH4). TPR repeat units lie at residues 313–346 (PNAY…KPDH), 347–380 (VDAW…DPKN), 381–418 (LEAM…IWSR), 419–456 (IKQQ…STID), 457–490 (PEIQ…NPND), 491–524 (ELMW…KPSF), and 525–558 (VRAR…HEVN).

Belongs to the peroxisomal targeting signal receptor family. Interacts (via WxxxF/Y and LVxEF motifs) with PEX14; promoting translocation through the PEX13-PEX14 docking complex. In terms of processing, monoubiquitinated at Cys-6 by PEX2 during PEX5 passage through the retrotranslocation channel: monoubiquitination acts as a signal for PEX5 extraction and is required for proper export from peroxisomes and recycling. Ubiquitination at Cys-6 is UBC4-independent but requires the presence of PEX4. When PEX5 recycling is compromised, polyubiquitinated at Lys-18 and Lys-24 by PEX10 during its passage through the retrotranslocation channel, leading to its degradation. Ubiquitination at Lys-18 and Lys-24 are UBC4-dependent. Monoubiquitination at Cys-6 and polyubiquitination at Lys-18 and Lys-24 are removed by UBP15 in the cytosol, resetting PEX5 for a subsequent import cycle.

It localises to the cytoplasm. It is found in the cytosol. The protein resides in the peroxisome matrix. Its function is as follows. Receptor that mediates peroxisomal import of proteins containing a C-terminal PTS1-type tripeptide peroxisomal targeting signal (SKL-type). Binds to cargo proteins containing a PTS1 peroxisomal targeting signal in the cytosol, and translocates them into the peroxisome matrix by passing through the PEX13-PEX14 docking complex along with cargo proteins. PEX5 receptor is then retrotranslocated into the cytosol, leading to release of bound cargo in the peroxisome matrix, and reset for a subsequent peroxisome import cycle. This chain is Peroxisomal targeting signal receptor, found in Saccharomyces cerevisiae (strain ATCC 204508 / S288c) (Baker's yeast).